Here is a 544-residue protein sequence, read N- to C-terminus: Probable protein kinase UbiB (544 aa).

The region spanning 123-501 is the Protein kinase domain; the sequence is DFDLVPLASA…KRQQATGKFL (379 aa). ATP-binding positions include 129–137 and Lys-152; that span reads LASASIAQV. Asp-287 acts as the Proton acceptor in catalysis. 2 helical membrane passes run 496–516 and 519–539; these read ATGK…AILV and TYEQ…LFSW.

It belongs to the ABC1 family. UbiB subfamily.

It is found in the cell inner membrane. The protein operates within cofactor biosynthesis; ubiquinone biosynthesis [regulation]. Is probably a protein kinase regulator of UbiI activity which is involved in aerobic coenzyme Q (ubiquinone) biosynthesis. This chain is Probable protein kinase UbiB, found in Vibrio vulnificus (strain CMCP6).